The following is a 757-amino-acid chain: DNA endonuclease RBBP8 (757 aa).

Positions Asp-22–Leu-45 are essential for binding to the MRN complex and for RPA focus formation on DNA damage. Residues Thr-35–Leu-84 are a coiled coil. The interval Leu-45 to Ile-160 is required for interaction with LMO4, probably by stabilizing the interaction through RPPB8 dimerization. Residues Lys-62 and Lys-115 each participate in a glycyl lysine isopeptide (Lys-Gly) (interchain with G-Cter in SUMO2) cross-link. Residues Ile-117 to Leu-138 adopt a coiled-coil conformation. Lys-193 is covalently cross-linked (Glycyl lysine isopeptide (Lys-Gly) (interchain with G-Cter in SUMO2)). Phosphoserine is present on Ser-272. Thr-309 carries the post-translational modification Phosphothreonine. Ser-320, Ser-321, and Ser-343 each carry phosphoserine. The tract at residues Gly-348–Asp-375 is disordered. Glycyl lysine isopeptide (Lys-Gly) (interchain with G-Cter in SUMO2) cross-links involve residues Lys-354 and Lys-372. At Ser-373 the chain carries Phosphoserine. Residues Lys-390, Lys-399, and Lys-405 each participate in a glycyl lysine isopeptide (Lys-Gly) (interchain with G-Cter in SUMO2) cross-link. The span at Thr-407 to Ile-417 shows a compositional bias: polar residues. Positions Thr-407–Val-430 are disordered. Over residues His-419–Val-429 the composition is skewed to basic and acidic residues. Residues Lys-433 and Lys-443 each participate in a glycyl lysine isopeptide (Lys-Gly) (interchain with G-Cter in SUMO2) cross-link. Positions Pro-484–Ser-488 are PXDLS motif. The PXDLS motif signature appears at Pro-484 to Ser-488. A damage-recruitment motif region spans residues Cys-503–Glu-551. A Glycyl lysine isopeptide (Lys-Gly) (interchain with G-Cter in SUMO2); alternate cross-link involves residue Lys-520. The interval Arg-524–Pro-544 is disordered. Residues Lys-564 and Lys-570 each participate in a glycyl lysine isopeptide (Lys-Gly) (interchain with G-Cter in SUMO2) cross-link. Lys-596 participates in a covalent cross-link: Glycyl lysine isopeptide (Lys-Gly) (interchain with G-Cter in SUMO2); alternate. Glycyl lysine isopeptide (Lys-Gly) (interchain with G-Cter in SUMO2) cross-links involve residues Lys-605, Lys-630, and Lys-632. The segment at Ser-633–Gly-677 is required for interaction with LMO4, probably by making physical contact with LMO4. Position 656 is a phosphoserine; by ATM (Ser-656). Lys-668 is covalently cross-linked (Glycyl lysine isopeptide (Lys-Gly) (interchain with G-Cter in SUMO2)). Ser-671 is subject to Phosphoserine. Residues Lys-696–Tyr-728 show a composition bias toward basic and acidic residues. A disordered region spans residues Lys-696 to Trp-757. Lys-711 participates in a covalent cross-link: Glycyl lysine isopeptide (Lys-Gly) (interchain with G-Cter in SUMO2). Ser-715 is subject to Phosphoserine. Polar residues predominate over residues Ser-747–Trp-757.

It belongs to the COM1/SAE2/CtIP family. As to quaternary structure, homotetramer; formed by antiparallel association of helical extensions protruding from the N-termini of two parallel coiled-coil dimers. Forms a dumbbell-shaped particle in which polar globular domains are held about 30 nm apart by a central rod. Homotetramerization is required for DNA-end resection and repair. Interacts (via the PXDLS motif) with CTBP1; the interaction is disrupted via binding of the adenovirus E1A to CTBP1. Component of the BRCA1-RBBP8 complex. Interacts (the Ser-321 phosphorylated form) with BRCA1 (via the C-terminal BRCT domains): the interaction occurs in the G2 phase, ubiquitinates RBBP8 and involves RBBP8 in BRCA1-dependent G2/M checkpoint control on DNA damage. Interacts with RB1. Interacts with the MRN complex. Interacts directly with MRE11; the interaction is required for efficient homologous recombination (HR) and regulation of the MRN complex. Interacts directly with RAD50. Interacts (when phosphorylated by CDK1) with NBN; promoting association with the MRN complex. Interacts with LMO4 (via the LIM zinc-binding 1 domain). Interacts with SIAH1. Interacts with RNF138. Interacts with EXD2. Interacts with CUL3 and KLHL15; this interaction leads to RBBP8 proteasomal degradation. Directly interacts with PIN1; this interaction depends upon RBBP8 phosphorylation, predominantly at Thr-309. Interacts with FZR1; this interaction leads to APC/C-mediated RBBP8 proteasomal degradation. Interacts with AUNIP; leading to recruit RBBP8 to sites of DNA damage. Interacts with SAMHD1. Interacts with HDGFL2. In terms of processing, hyperphosphorylation upon ionizing radiation results in dissociation from BRCA1. Phosphorylation by CDK1 is essential for the recruitment to DNA and the DNA repair function. Phosphorylated on Ser-321 as cells enter G2 phase. This phosphorylation is required for binding BRCA1 and for the G2/M DNA damage transition checkpoint control. Phosphorylation at Thr-309, probably catalyzed by CDK2, is required for PIN1-binding, while phosphorylation at Ser-272 serves as a PIN1 isomerization site. Phosphorylation at Thr-309 is cell-cycle dependent. It steadily increases during S phase, peaks at late S/G2 phase, and drops at G1. Phosphorylation is not required for tetramerization. Binds to DNA more strongly when dephosphorylated. Ubiquitinated. Ubiquitination at multiple sites by BRCA1 (via its N-terminal RING domain) does not lead to its proteasomal degradation but instead the ubiquitinated RBBP8 binds to chromatin following DNA damage and may play a role in G2/M checkpoint control. Ubiquitinated by RNF138 at its N-terminus. Ubiquitinated through 'Lys-48' by the E3 CUL3-KLHL15 complex; this modification leads to proteasomal degradation. Ubiquitinated by the E3 FZR1/APC/C complex; this modification leads to proteasomal degradation.

Its subcellular location is the nucleus. It localises to the chromosome. Endonuclease that cooperates with the MRE11-RAD50-NBN (MRN) complex in DNA-end resection, the first step of double-strand break (DSB) repair through the homologous recombination (HR) pathway. HR is restricted to S and G2 phases of the cell cycle and preferentially repairs DSBs resulting from replication fork collapse. Key determinant of DSB repair pathway choice, as it commits cells to HR by preventing classical non-homologous end-joining (NHEJ). Specifically promotes the endonuclease activity of the MRN complex to clear DNA ends containing protein adducts: recruited to DSBs by NBN following phosphorylation by CDK1, and promotes the endonuclease activity of MRE11 to clear protein-DNA adducts and generate clean double-strand break ends. Functions downstream of the MRN complex and ATM, promotes ATR activation and its recruitment to DSBs in the S/G2 phase facilitating the generation of ssDNA. Component of the BRCA1-RBBP8 complex that regulates CHEK1 activation and controls cell cycle G2/M checkpoints on DNA damage. During immunoglobulin heavy chain class-switch recombination, promotes microhomology-mediated alternative end joining (A-NHEJ) and plays an essential role in chromosomal translocations. Binds preferentially to DNA Y-junctions and to DNA substrates with blocked ends and promotes intermolecular DNA bridging. This Bos taurus (Bovine) protein is DNA endonuclease RBBP8 (RBBP8).